We begin with the raw amino-acid sequence, 199 residues long: Probable nicotinate-nucleotide adenylyltransferase (199 aa).

The protein belongs to the NadD family.

The enzyme catalyses nicotinate beta-D-ribonucleotide + ATP + H(+) = deamido-NAD(+) + diphosphate. Its pathway is cofactor biosynthesis; NAD(+) biosynthesis; deamido-NAD(+) from nicotinate D-ribonucleotide: step 1/1. Catalyzes the reversible adenylation of nicotinate mononucleotide (NaMN) to nicotinic acid adenine dinucleotide (NaAD). The protein is Probable nicotinate-nucleotide adenylyltransferase of Roseiflexus castenholzii (strain DSM 13941 / HLO8).